A 498-amino-acid chain; its full sequence is MTSSKNPTNDNSYFDAVLVGGGIMSSTLALLISEVLPDIKFLIIEKLNAPGSESTGAFNNAGTGHAANCELNYTPLDEKGNLKIDKALSINRSFETSMSLWASLYEAGKIDIKKFLKFIPHISFVSGQDNISFLKKRFQKMTENPEFIDMEFSSSFDEISSWAPLITKDRNPSTQIAATRIGRGTDINFEALTKEYLSLVSLNKNVEIRYKTELVDLKKIDKKQWELEISSEGRKTSIRTGYVFLGAGGKTINYLQKSKIPEAKSYGGFPVSGKWLICEKKDLTEKHNSKVYGKADIGSPPMSVPHLDTRWIDNKKLLLYGPFAGFTTKFLKQSSYFDLFSSIKKNNIFSMLDVGFKNNDLINYLISQSLKNHNSRVENLKNMMPSANSSDWYLKNAGQRVQIIKKTEAGGSLKFGTEIVNSSDGSLSALLGASPGASTAVSIMVKVLEKSVFFLNDKHNLQKKINDLIYPELSDSENNSTFIKDIKKRNNSIFGFHP.

It belongs to the MQO family. The cofactor is FAD.

The enzyme catalyses (S)-malate + a quinone = a quinol + oxaloacetate. It participates in carbohydrate metabolism; tricarboxylic acid cycle; oxaloacetate from (S)-malate (quinone route): step 1/1. This chain is Probable malate:quinone oxidoreductase, found in Prochlorococcus marinus (strain MIT 9301).